The primary structure comprises 423 residues: RNA polymerase sigma factor SigA (423 aa).

The segment at 1–76 (MKKSKRKNAQ…EEDLPIPKIS (76 aa)) is disordered. Residues 21 to 70 (VQEEAEELPEFPEGEPDPDLEDPDLALEDDLLDLPEEGEGLDLEEEEEDL) are compositionally biased toward acidic residues. Residues 78-113 (SDPVRQYLHEIGQVPLLTLEEEVELARKVEEGMEAI) form a sigma-70 factor domain-1 region. The tract at residues 187 to 257 (LIEANLRLVV…NRAIADQART (71 aa)) is sigma-70 factor domain-2. The Interaction with polymerase core subunit RpoC signature appears at 211 to 214 (DLIQ). Residues 266 to 344 (ETINKLSRTA…DEHLPSPVDA (79 aa)) form a sigma-70 factor domain-3 region. The tract at residues 357 to 409 (ALSKLSEREAMVLKLRKGLIDGREHTLEEVGAFFGVTRERIRQIENKALRKLK) is sigma-70 factor domain-4. The segment at residues 383 to 402 (LEEVGAFFGVTRERIRQIEN) is a DNA-binding region (H-T-H motif).

Belongs to the sigma-70 factor family. RpoD/SigA subfamily. As to quaternary structure, interacts transiently with the RNA polymerase catalytic core formed by RpoA, RpoB, RpoC and RpoZ (2 alpha, 1 beta, 1 beta' and 1 omega subunit) to form the RNA polymerase holoenzyme that can initiate transcription.

It is found in the cytoplasm. In terms of biological role, sigma factors are initiation factors that promote the attachment of RNA polymerase to specific initiation sites and are then released. This sigma factor is the primary sigma factor during exponential growth. The chain is RNA polymerase sigma factor SigA from Thermus thermophilus (strain ATCC BAA-163 / DSM 7039 / HB27).